Consider the following 1187-residue polypeptide: DNA-directed RNA polymerase subunit beta (1187 aa).

The interval 1150–1187 is disordered; that stretch reads KDEDDDPASSADDLGFNIGARPDAAAKEDQKAEEPEYQ. The span at 1173–1187 shows a compositional bias: basic and acidic residues; it reads AAAKEDQKAEEPEYQ.

It belongs to the RNA polymerase beta chain family. The RNAP catalytic core consists of 2 alpha, 1 beta, 1 beta' and 1 omega subunit. When a sigma factor is associated with the core the holoenzyme is formed, which can initiate transcription.

The catalysed reaction is RNA(n) + a ribonucleoside 5'-triphosphate = RNA(n+1) + diphosphate. Functionally, DNA-dependent RNA polymerase catalyzes the transcription of DNA into RNA using the four ribonucleoside triphosphates as substrates. The sequence is that of DNA-directed RNA polymerase subunit beta from Bifidobacterium longum (strain DJO10A).